The sequence spans 396 residues: Elongation factor Tu (396 aa).

The 196-residue stretch at 10–205 (KPHVNIGTIG…AVDESIPDPV (196 aa)) folds into the tr-type G domain. The G1 stretch occupies residues 19–26 (GHVDHGKT). 19 to 26 (GHVDHGKT) contacts GTP. T26 contacts Mg(2+). Residues 62–66 (GITIN) are G2. Residues 83–86 (DAPG) form a G3 region. GTP contacts are provided by residues 83–87 (DAPGH) and 138–141 (NKAD). The G4 stretch occupies residues 138–141 (NKAD). A G5 region spans residues 175–177 (SAL).

Belongs to the TRAFAC class translation factor GTPase superfamily. Classic translation factor GTPase family. EF-Tu/EF-1A subfamily. Monomer.

Its subcellular location is the cytoplasm. It catalyses the reaction GTP + H2O = GDP + phosphate + H(+). Its function is as follows. GTP hydrolase that promotes the GTP-dependent binding of aminoacyl-tRNA to the A-site of ribosomes during protein biosynthesis. The chain is Elongation factor Tu from Rhodococcus jostii (strain RHA1).